The chain runs to 437 residues: MLDKNKQIWFIGIKGTGMASLALVLHDLGYNVAGSDIEKYTFTQVPLEKAGIEVKNFDPANIKSNAEQVIVKGNAFKQDNPEVAACLDKNVEWQSYPDTVEEIVQMHTSIGVSGTHGKTSTTSLLAHVLGEVAPTSYLIGDGRGKGVEGSRFFVYEADEYRRHFLAYHPDYQIMTNIDFDHPDYFKDQDDYTSAFQTAADQTKKALFVWGDDKRLQSLKTDIPKYTYGFKDTDDFQAVNIEKTTTGSKFNVLAHGKDLGRFEIHLFGDHSILNTTAVIAVAYTEKVPMDDIKEGLLTFKGAKRRFAEKDFGDVSVIDDYAHHPTEMRATIQAARQKFPDKELVVVFQPHTFSRTKKYQKDFEEILRDVDKAYVTPIYASAREASGDISSEDLVNNIPGSEVIDLDNIADLTKHKNAVVVFMGAGDIPKYEDAYEKLL.

ATP is bound at residue 114–120; sequence GTHGKTS.

The protein belongs to the MurCDEF family.

The protein localises to the cytoplasm. It catalyses the reaction UDP-N-acetyl-alpha-D-muramate + L-alanine + ATP = UDP-N-acetyl-alpha-D-muramoyl-L-alanine + ADP + phosphate + H(+). Its pathway is cell wall biogenesis; peptidoglycan biosynthesis. Its function is as follows. Cell wall formation. The chain is UDP-N-acetylmuramate--L-alanine ligase from Lactobacillus johnsonii (strain CNCM I-12250 / La1 / NCC 533).